Here is a 628-residue protein sequence, read N- to C-terminus: Kinesin-like protein KIN-10B (628 aa).

The Kinesin motor domain maps to 20-340 (NVRVVLRVRP…VSLAARSRHI (321 aa)). Position 114–121 (114–121 (GATGSGKT)) interacts with ATP. Residues 496 to 519 (SPIDSNAKPNSAHGSSPFLKPMTP) form a disordered region. Positions 498 to 509 (IDSNAKPNSAHG) are enriched in polar residues.

It belongs to the TRAFAC class myosin-kinesin ATPase superfamily. Kinesin family. KIN-10 subfamily.

This Arabidopsis thaliana (Mouse-ear cress) protein is Kinesin-like protein KIN-10B.